The primary structure comprises 143 residues: NADH-quinone oxidoreductase subunit A (143 aa).

Transmembrane regions (helical) follow at residues 8–28 (FGNV…GYLT), 63–83 (FYVV…LFPW), and 93–113 (FALV…VYAW).

Belongs to the complex I subunit 3 family. In terms of assembly, NDH-1 is composed of 14 different subunits. Subunits NuoA, H, J, K, L, M, N constitute the membrane sector of the complex.

It localises to the cell inner membrane. The catalysed reaction is a quinone + NADH + 5 H(+)(in) = a quinol + NAD(+) + 4 H(+)(out). In terms of biological role, NDH-1 shuttles electrons from NADH, via FMN and iron-sulfur (Fe-S) centers, to quinones in the respiratory chain. The immediate electron acceptor for the enzyme in this species is believed to be a menaquinone. Couples the redox reaction to proton translocation (for every two electrons transferred, four hydrogen ions are translocated across the cytoplasmic membrane), and thus conserves the redox energy in a proton gradient. The chain is NADH-quinone oxidoreductase subunit A from Chlorobium phaeovibrioides (strain DSM 265 / 1930) (Prosthecochloris vibrioformis (strain DSM 265)).